Consider the following 312-residue polypeptide: Olfactory receptor 1D2 (312 aa).

Residues 1 to 25 lie on the Extracellular side of the membrane; it reads MDGGNQSEGSEFLLLGMSESPEQQR. A glycan (N-linked (GlcNAc...) asparagine) is linked at Asn5. The chain crosses the membrane as a helical span at residues 26-49; it reads ILFWMFLSMYLVTVVGNVLIILAI. Topologically, residues 50 to 57 are cytoplasmic; the sequence is SSDSCLHT. Residues 58–79 traverse the membrane as a helical segment; it reads PMYFFLANLSFTDLFFVTNTIP. Residues 80–100 lie on the Extracellular side of the membrane; sequence KMLVNLQSQNKAISYAGCLTQ. Residues Cys97 and Cys189 are joined by a disulfide bond. The chain crosses the membrane as a helical span at residues 101–120; that stretch reads LYFLVSLVALDNLILAVMAY. The Cytoplasmic portion of the chain corresponds to 121 to 139; sequence DRYVAICCPLHYTTAMSPK. A helical membrane pass occupies residues 140-158; it reads LCILLLSLCWVLSVLYGLI. Over 159 to 196 the chain is Extracellular; the sequence is HTLLMTRVTFCGSRKIHYIFCEMYVLLRMACSNIQTNH. An N-linked (GlcNAc...) asparagine glycan is attached at Asn195. A helical transmembrane segment spans residues 197–219; the sequence is TVLIATGCFIFLIPFGFVIISYV. At 220–236 the chain is on the cytoplasmic side; the sequence is LIIRAILRIPSLSKKYK. A helical transmembrane segment spans residues 237–259; that stretch reads AFSTCASHLGAVSLFYGTLCMVY. Over 260–271 the chain is Extracellular; that stretch reads LKPLHTYSVKDS. A helical membrane pass occupies residues 272–291; it reads VATVMYAVVTPMMNPFIYSL. The Cytoplasmic portion of the chain corresponds to 292 to 312; it reads RNKDMHGALGRLLDKHFKRLT.

It belongs to the G-protein coupled receptor 1 family.

It is found in the cell membrane. Functionally, odorant receptor. The sequence is that of Olfactory receptor 1D2 (OR1D2) from Pan troglodytes (Chimpanzee).